The primary structure comprises 192 residues: Peptidyl-tRNA hydrolase (192 aa).

Y17 contacts tRNA. Catalysis depends on H22, which acts as the Proton acceptor. The tRNA site is built by F68, N70, and N116.

Belongs to the PTH family. Monomer.

It is found in the cytoplasm. The enzyme catalyses an N-acyl-L-alpha-aminoacyl-tRNA + H2O = an N-acyl-L-amino acid + a tRNA + H(+). In terms of biological role, hydrolyzes ribosome-free peptidyl-tRNAs (with 1 or more amino acids incorporated), which drop off the ribosome during protein synthesis, or as a result of ribosome stalling. Functionally, catalyzes the release of premature peptidyl moieties from peptidyl-tRNA molecules trapped in stalled 50S ribosomal subunits, and thus maintains levels of free tRNAs and 50S ribosomes. In Buchnera aphidicola subsp. Cinara cedri (strain Cc), this protein is Peptidyl-tRNA hydrolase.